The primary structure comprises 257 residues: UPF0246 protein Rpic_2164 (257 aa).

Belongs to the UPF0246 family.

This is UPF0246 protein Rpic_2164 from Ralstonia pickettii (strain 12J).